The primary structure comprises 787 residues: Pyridoxal-dependent decarboxylase domain-containing protein 1 (787 aa).

The segment covering 29-41 (EDSQRRTEEENGK) has biased composition (basic and acidic residues). A disordered region spans residues 29-52 (EDSQRRTEEENGKKLLSGDIPGPL). Ser653 bears the Phosphoserine mark. Positions 683–787 (QGSGVTPPQT…PQVEEPESLR (105 aa)) are disordered. Residues 685–697 (SGVTPPQTPTGTR) are compositionally biased toward polar residues. 2 positions are modified to phosphothreonine: Thr688 and Thr692. Ser711, Ser719, and Ser723 each carry phosphoserine. Residues 735–745 (QSSGGQEASEA) are compositionally biased toward polar residues. Phosphoserine is present on residues Ser747 and Ser785. The span at 774–787 (QDDRPQVEEPESLR) shows a compositional bias: basic and acidic residues.

This sequence belongs to the group II decarboxylase family. Requires pyridoxal 5'-phosphate as cofactor.

The protein is Pyridoxal-dependent decarboxylase domain-containing protein 1 (PDXDC1) of Bos taurus (Bovine).